The primary structure comprises 230 residues: Acyl-protein thioesterase 1 (230 aa).

Catalysis depends on charge relay system residues serine 119, aspartate 174, and histidine 208. Lysine 224 is subject to N6-acetyllysine.

The protein belongs to the AB hydrolase superfamily. AB hydrolase 2 family. In terms of assembly, homodimer.

It localises to the cytoplasm. The protein localises to the cell membrane. The protein resides in the nucleus membrane. Its subcellular location is the endoplasmic reticulum. The enzyme catalyses S-hexadecanoyl-L-cysteinyl-[protein] + H2O = L-cysteinyl-[protein] + hexadecanoate + H(+). It carries out the reaction 1-hexadecanoyl-sn-glycero-3-phosphocholine + H2O = sn-glycerol 3-phosphocholine + hexadecanoate + H(+). The catalysed reaction is a 1-(9Z-octadecenoyl)-2-acyl-sn-glycero-3-phosphocholine + H2O = a 2-acyl-sn-glycero-3-phosphocholine + (9Z)-octadecenoate + H(+). Its function is as follows. Acts as an acyl-protein thioesterase. Hydrolyzes fatty acids from S-acylated cysteine residues in proteins such as trimeric G alpha proteins or HRAS. Acts as a palmitoyl thioesterase that catalyzes depalmitoylation of proteins, such as ADRB2, KCNMA1 and SQSTM1. Acts as a negative regulator of autophagy by mediating palmitoylation of SQSTM1, decreasing affinity between SQSTM1 and ATG8 proteins and recruitment of ubiquitinated cargo proteins to autophagosomes. Acts as a lysophospholipase and hydrolyzes lysophosphatidylcholine (lyso-PC). Also hydrolyzes lysophosphatidylethanolamine (lyso-PE), lysophosphatidylinositol (lyso-PI) and lysophosphatidylserine (lyso-PS). Has much higher thioesterase activity than lysophospholipase activity. Contributes to the production of lysophosphatidic acid (LPA) during blood coagulation by recognizing and cleaving plasma phospholipids to generate lysophospholipids which in turn act as substrates for ENPP2 to produce LPA. The chain is Acyl-protein thioesterase 1 (Lypla1) from Mus musculus (Mouse).